Consider the following 124-residue polypeptide: uncharacterized protein (124 aa).

This is an uncharacterized protein from Magallana gigas (Pacific oyster).